The sequence spans 611 residues: Serine/arginine repetitive matrix protein 4 (611 aa).

Disordered stretches follow at residues 38-248 (ARKP…PLQM) and 263-611 (SAAD…STRR). Basic residues-rich tracts occupy residues 107 to 123 (RGKKKKKKSTRKKRRRS) and 131 to 189 (VKKK…HRCP). Residues 190 to 202 (SRSQSSESRPSSC) are compositionally biased toward low complexity. The span at 203-216 (ESRHRGRSPEEGQK) shows a compositional bias: basic and acidic residues. The span at 217–226 (SRRRHSRRCS) shows a compositional bias: basic residues. Residues 270–290 (KTASPLTTSRGRSQEYDSGND) are compositionally biased toward polar residues. Low complexity predominate over residues 291 to 301 (TSSPPSTQTSS). A compositionally biased stretch (polar residues) spans 322–341 (LNSGNTSDSGNSFTTSSPQN). Low complexity-rich tracts occupy residues 390–422 (SRSSSYASTRSSSHSSRSPNPRASPRYTQSRST) and 430–461 (SRSPSYSSKSGKRSPPSRSSRSRRSPSYSRYS). Over residues 462-482 (PSRERDPKYSEKDSQQRERER) the composition is skewed to basic and acidic residues. Over residues 483–498 (ARRRRRSYSPMRKRRR) the composition is skewed to basic residues. Over residues 499–508 (DSPSHLEARR) the composition is skewed to basic and acidic residues. Low complexity predominate over residues 522–549 (PSPSSSGSLSSTSSWYSSSSSRSASRSY). A compositionally biased stretch (basic residues) spans 550–564 (SRSRSRSRSRRRSRT). Low complexity predominate over residues 565–580 (RTSSSSSSRSPSPGSR). Over residues 581 to 595 (SRSRSRSRSRSRSRS) the composition is skewed to basic residues. Positions 596 to 611 (QSRSYSSADSYSSTRR) are enriched in low complexity.

Belongs to the nSR100 family. Phosphorylated. Specifically expressed in neuronal cells (at protein level). Expressed in the cerebellum.

It localises to the nucleus. In terms of biological role, splicing factor specifically required for neural cell differentiation. Acts in conjunction with nPTB/PTBP2 by binding directly to its regulated target transcripts and promotes neural-specific exon inclusion in many genes that function in neural cell differentiation. Required to promote the inclusion of neural-specific exon 10 in nPTB/PTBP2, leading to increased expression of neural-specific nPTB/PTBP2. Also promotes the inclusion of exon 16 in DAAM1 in neuron extracts. Promotes alternative splicing of REST transcripts to produce REST isoform 3 (REST4) with greatly reduced repressive activity, thereby activating expression of REST targets in neural cells. Plays an important role during embryonic development as well as in the proper functioning of the adult nervous system. Regulates alternative splicing events in genes with important neuronal functions. This chain is Serine/arginine repetitive matrix protein 4 (SRRM4), found in Homo sapiens (Human).